The following is a 217-amino-acid chain: Cytidylate kinase (217 aa).

An ATP-binding site is contributed by 10 to 18; the sequence is GPAGAGKST.

It belongs to the cytidylate kinase family. Type 1 subfamily.

It is found in the cytoplasm. The catalysed reaction is CMP + ATP = CDP + ADP. It catalyses the reaction dCMP + ATP = dCDP + ADP. The chain is Cytidylate kinase from Alkaliphilus oremlandii (strain OhILAs) (Clostridium oremlandii (strain OhILAs)).